Reading from the N-terminus, the 147-residue chain is Vasopressin-neurophysin 2-copeptin (147 aa).

Residues C1 and C6 are joined by a disulfide bond. G9 is modified (glycine amide). 7 disulfides stabilise this stretch: C22–C66, C25–C39, C33–C56, C40–C46, C73–C85, C79–C97, and C86–C91. N-linked (GlcNAc...) asparagine glycosylation is present at N114.

Belongs to the vasopressin/oxytocin family. As to quaternary structure, interacts with vasopressin receptors V1bR/AVPR1B (Ki=85 pM), V1aR/AVPR1A (Ki=0.6 nM) and V2R/AVPR2 (Ki=4.9 nM). Interacts with oxytocin receptor (OXTR) (Ki=110 nM).

The protein resides in the secreted. Its function is as follows. Neurophysin 2 specifically binds vasopressin. Functionally, vasopressin has a direct antidiuretic action on the kidney, it also causes vasoconstriction of the peripheral vessels. Acts by binding to vasopressin receptors (V1bR/AVPR1B, V1aR/AVPR1A, and V2R/AVPR2). The protein is Vasopressin-neurophysin 2-copeptin (AVP) of Ovis aries (Sheep).